The following is a 198-amino-acid chain: Pyridoxal 5'-phosphate synthase subunit PdxT (198 aa).

52 to 54 (GES) is a binding site for L-glutamine. The active-site Nucleophile is the Cys-84. Residues Arg-115 and 142 to 143 (IR) contribute to the L-glutamine site. Residues His-178 and Glu-180 each act as charge relay system in the active site.

This sequence belongs to the glutaminase PdxT/SNO family. In terms of assembly, in the presence of PdxS, forms a dodecamer of heterodimers. Only shows activity in the heterodimer.

The catalysed reaction is aldehydo-D-ribose 5-phosphate + D-glyceraldehyde 3-phosphate + L-glutamine = pyridoxal 5'-phosphate + L-glutamate + phosphate + 3 H2O + H(+). The enzyme catalyses L-glutamine + H2O = L-glutamate + NH4(+). It participates in cofactor biosynthesis; pyridoxal 5'-phosphate biosynthesis. In terms of biological role, catalyzes the hydrolysis of glutamine to glutamate and ammonia as part of the biosynthesis of pyridoxal 5'-phosphate. The resulting ammonia molecule is channeled to the active site of PdxS. This is Pyridoxal 5'-phosphate synthase subunit PdxT from Archaeoglobus fulgidus (strain ATCC 49558 / DSM 4304 / JCM 9628 / NBRC 100126 / VC-16).